The chain runs to 462 residues: uncharacterized protein (462 aa).

2 consecutive transmembrane segments (helical) span residues 12-32 (WWWL…APTV) and 257-277 (GLCV…LELV).

The protein belongs to the HHV-5 US29 protein family.

The protein localises to the host membrane. This is an uncharacterized protein from Homo sapiens (Human).